Consider the following 273-residue polypeptide: Formamidopyrimidine-DNA glycosylase (273 aa).

The active-site Schiff-base intermediate with DNA is the P2. E3 acts as the Proton donor in catalysis. Catalysis depends on K59, which acts as the Proton donor; for beta-elimination activity. DNA is bound by residues H93, R111, and R154. The segment at 239 to 273 (KVYGRGGEPCKECGHTLVRIRLAGRSTVFCPCCQV) adopts an FPG-type zinc-finger fold. R263 functions as the Proton donor; for delta-elimination activity in the catalytic mechanism.

Belongs to the FPG family. In terms of assembly, monomer. Zn(2+) is required as a cofactor.

It catalyses the reaction Hydrolysis of DNA containing ring-opened 7-methylguanine residues, releasing 2,6-diamino-4-hydroxy-5-(N-methyl)formamidopyrimidine.. The enzyme catalyses 2'-deoxyribonucleotide-(2'-deoxyribose 5'-phosphate)-2'-deoxyribonucleotide-DNA = a 3'-end 2'-deoxyribonucleotide-(2,3-dehydro-2,3-deoxyribose 5'-phosphate)-DNA + a 5'-end 5'-phospho-2'-deoxyribonucleoside-DNA + H(+). Functionally, involved in base excision repair of DNA damaged by oxidation or by mutagenic agents. Acts as a DNA glycosylase that recognizes and removes damaged bases. Has a preference for oxidized purines, such as 7,8-dihydro-8-oxoguanine (8-oxoG). Has AP (apurinic/apyrimidinic) lyase activity and introduces nicks in the DNA strand. Cleaves the DNA backbone by beta-delta elimination to generate a single-strand break at the site of the removed base with both 3'- and 5'-phosphates. The polypeptide is Formamidopyrimidine-DNA glycosylase (Desulfitobacterium hafniense (strain DSM 10664 / DCB-2)).